The chain runs to 446 residues: Putative diacyglycerol O-acyltransferase MT3481 (446 aa).

The active-site Proton acceptor is histidine 129. A disordered region spans residues 425–446 (SRALPSAARRGRPSVPTARARH).

It belongs to the long-chain O-acyltransferase family.

The catalysed reaction is an acyl-CoA + a 1,2-diacyl-sn-glycerol = a triacyl-sn-glycerol + CoA. The protein operates within glycerolipid metabolism; triacylglycerol biosynthesis. The protein is Putative diacyglycerol O-acyltransferase MT3481 of Mycobacterium tuberculosis (strain CDC 1551 / Oshkosh).